A 548-amino-acid chain; its full sequence is MNRRSCAFIFVTGGVSSSIGKGLTTSALASLMQSMGFRVCIRKMDPYLNVDPGTMSPLQHGEVFVTEDGTEADLDLGHYERFTGINCTHRDSTTAGRIYVDLIERERNGEYLGATVQVIPHVTNLIKDFIYSGSDQYDVILCEIGGTVGDIEGQPFFESARQVAYEVGKENVIYIHLTLVPYLEASGELKTKPSQHSVKALNALGIQPDFLICRTQSAQMSAADKRKIALFCNIREGNVIEAQDVDNIYKIPLIYKEQGLDTKISALLGCGPLEAGVSHWKEIVGRTRSLANSGKKLFVAIIGKYSGLCDAYISVDSALQHAAFAVGVNLSVQIIDARGKDMSDLSKFDMILIPGGFGNNGIDGKLLAITHARINNIPFLGICFGFQLAILEFARNVVGIKDADSTEFNKNCKAPVICFLDEWHRSDSSVERRRQSSQVGGTMRLGGYNCVLKKESKAYAIYNETEVISERHRHRYEANPHYLPELEAKGMLFSGYSEKGCDIPEILELKDHPWFLGVQFHPEFKSRIFKPHPLFLSFVRAGLLRKYS.

The amidoligase domain stretch occupies residues 1–270; it reads MNRRSCAFIF…DTKISALLGC (270 aa). A CTP-binding site is contributed by Ser-17. Ser-17 serves as a coordination point for UTP. ATP-binding positions include 18–23 and Asp-75; that span reads SIGKGL. The Mg(2+) site is built by Asp-75 and Glu-143. Residues 150-152, 190-195, and Lys-227 each bind CTP; these read DIE and KTKPSQ. UTP-binding positions include 190–195 and Lys-227; that span reads KTKPSQ. Positions 305-548 constitute a Glutamine amidotransferase type-1 domain; the sequence is YSGLCDAYIS…VRAGLLRKYS (244 aa). Gly-356 contacts L-glutamine. The active-site Nucleophile; for glutamine hydrolysis is the Cys-383. L-glutamine is bound by residues 384–387, Glu-407, and Arg-475; that span reads FGFQ. Residues His-521 and Glu-523 contribute to the active site.

The protein belongs to the CTP synthase family. As to quaternary structure, homotetramer.

The catalysed reaction is UTP + L-glutamine + ATP + H2O = CTP + L-glutamate + ADP + phosphate + 2 H(+). It carries out the reaction L-glutamine + H2O = L-glutamate + NH4(+). It catalyses the reaction UTP + NH4(+) + ATP = CTP + ADP + phosphate + 2 H(+). It functions in the pathway pyrimidine metabolism; CTP biosynthesis via de novo pathway; CTP from UDP: step 2/2. Its activity is regulated as follows. Allosterically activated by GTP, when glutamine is the substrate; GTP has no effect on the reaction when ammonia is the substrate. The allosteric effector GTP functions by stabilizing the protein conformation that binds the tetrahedral intermediate(s) formed during glutamine hydrolysis. Inhibited by the product CTP, via allosteric rather than competitive inhibition. In terms of biological role, catalyzes the ATP-dependent amination of UTP to CTP with either L-glutamine or ammonia as the source of nitrogen. Regulates intracellular CTP levels through interactions with the four ribonucleotide triphosphates. The chain is CTP synthase from Neorickettsia sennetsu (strain ATCC VR-367 / Miyayama) (Ehrlichia sennetsu).